Consider the following 313-residue polypeptide: Cytochrome c biogenesis protein CcsA (313 aa).

Transmembrane regions (helical) follow at residues 9 to 29 (ILTH…LITF), 44 to 64 (GIIV…ISSG), 71 to 91 (LYES…IPYF), 111 to 131 (GFAT…VPAL), 143 to 163 (MILG…LLVI), 217 to 237 (VISL…VWAN), 244 to 264 (WNWD…AIYL), and 278 to 298 (AIVA…VNLL).

The protein belongs to the CcmF/CycK/Ccl1/NrfE/CcsA family. In terms of assembly, may interact with Ccs1.

Its subcellular location is the plastid. It is found in the chloroplast thylakoid membrane. Required during biogenesis of c-type cytochromes (cytochrome c6 and cytochrome f) at the step of heme attachment. This Solanum bulbocastanum (Wild potato) protein is Cytochrome c biogenesis protein CcsA.